Here is a 212-residue protein sequence, read N- to C-terminus: Probable GTP-binding protein EngB (212 aa).

One can recognise an EngB-type G domain in the interval G27–G211. Residues G35–S42, G62–E66, D89–G92, T156–D159, and T190–S192 contribute to the GTP site. Positions 42 and 64 each coordinate Mg(2+).

The protein belongs to the TRAFAC class TrmE-Era-EngA-EngB-Septin-like GTPase superfamily. EngB GTPase family. It depends on Mg(2+) as a cofactor.

In terms of biological role, necessary for normal cell division and for the maintenance of normal septation. In Mesorhizobium japonicum (strain LMG 29417 / CECT 9101 / MAFF 303099) (Mesorhizobium loti (strain MAFF 303099)), this protein is Probable GTP-binding protein EngB.